The sequence spans 298 residues: Aspartate carbamoyltransferase catalytic subunit (298 aa).

Carbamoyl phosphate is bound by residues R53 and T54. L-aspartate is bound at residue K81. 3 residues coordinate carbamoyl phosphate: R103, H132, and Q135. The L-aspartate site is built by R166 and R218. The carbamoyl phosphate site is built by G259 and P260.

Belongs to the aspartate/ornithine carbamoyltransferase superfamily. ATCase family. As to quaternary structure, heterododecamer (2C3:3R2) of six catalytic PyrB chains organized as two trimers (C3), and six regulatory PyrI chains organized as three dimers (R2).

The catalysed reaction is carbamoyl phosphate + L-aspartate = N-carbamoyl-L-aspartate + phosphate + H(+). It functions in the pathway pyrimidine metabolism; UMP biosynthesis via de novo pathway; (S)-dihydroorotate from bicarbonate: step 2/3. Functionally, catalyzes the condensation of carbamoyl phosphate and aspartate to form carbamoyl aspartate and inorganic phosphate, the committed step in the de novo pyrimidine nucleotide biosynthesis pathway. The chain is Aspartate carbamoyltransferase catalytic subunit from Anaplasma marginale (strain St. Maries).